We begin with the raw amino-acid sequence, 362 residues long: Dual-specificity RNA methyltransferase RlmN (362 aa).

Glutamate 100 functions as the Proton acceptor in the catalytic mechanism. The 240-residue stretch at 106–345 folds into the Radical SAM core domain; sequence EPDRNTLCIS…VFIRNSRGED (240 aa). An intrachain disulfide couples cysteine 113 to cysteine 350. Positions 120, 124, and 127 each coordinate [4Fe-4S] cluster. S-adenosyl-L-methionine contacts are provided by residues 177–178, serine 209, 231–233, and asparagine 307; these read GE and SLH. The S-methylcysteine intermediate role is filled by cysteine 350.

The protein belongs to the radical SAM superfamily. RlmN family. [4Fe-4S] cluster is required as a cofactor.

It is found in the cytoplasm. It carries out the reaction adenosine(2503) in 23S rRNA + 2 reduced [2Fe-2S]-[ferredoxin] + 2 S-adenosyl-L-methionine = 2-methyladenosine(2503) in 23S rRNA + 5'-deoxyadenosine + L-methionine + 2 oxidized [2Fe-2S]-[ferredoxin] + S-adenosyl-L-homocysteine. It catalyses the reaction adenosine(37) in tRNA + 2 reduced [2Fe-2S]-[ferredoxin] + 2 S-adenosyl-L-methionine = 2-methyladenosine(37) in tRNA + 5'-deoxyadenosine + L-methionine + 2 oxidized [2Fe-2S]-[ferredoxin] + S-adenosyl-L-homocysteine. In terms of biological role, specifically methylates position 2 of adenine 2503 in 23S rRNA and position 2 of adenine 37 in tRNAs. m2A2503 modification seems to play a crucial role in the proofreading step occurring at the peptidyl transferase center and thus would serve to optimize ribosomal fidelity. This Desulfotalea psychrophila (strain LSv54 / DSM 12343) protein is Dual-specificity RNA methyltransferase RlmN.